We begin with the raw amino-acid sequence, 122 residues long: S-protein homolog 23 (122 aa).

Positions 1-20 (MQNLSILLVCSFCILGHVSS) are cleaved as a signal peptide. The N-linked (GlcNAc...) asparagine glycan is linked to Asn86.

The protein belongs to the plant self-incompatibility (S1) protein family.

It is found in the secreted. The chain is S-protein homolog 23 from Arabidopsis thaliana (Mouse-ear cress).